Here is a 667-residue protein sequence, read N- to C-terminus: Mannosyl-oligosaccharide alpha-1,2-mannosidase IA (667 aa).

Residues 1-18 are Cytoplasmic-facing; the sequence is MYRISPIGRKSNFHSREK. Residues 19 to 39 form a helical; Signal-anchor for type II membrane protein membrane-spanning segment; that stretch reads CLIGLVLVTLCFLCFGGIFLL. The Lumenal segment spans residues 40–667; that stretch reads PDNFGSDRVL…PVTLPVSNAS (628 aa). Residues 154 to 192 are disordered; the sequence is GDNAASQASSHPQSSAQQHNQQQPQLPLGGGGNDQAPDT. Low complexity predominate over residues 156-178; sequence NAASQASSHPQSSAQQHNQQQPQ. N-linked (GlcNAc...) asparagine glycosylation is present at Asn278. An intrachain disulfide couples Cys483 to Cys515. Catalysis depends on Glu529, which acts as the Proton donor. Residue Thr640 participates in Ca(2+) binding.

It belongs to the glycosyl hydrolase 47 family. It depends on Ca(2+) as a cofactor. The cofactor is Mg(2+). In terms of tissue distribution, complex spatial distribution during embryogenesis, including expression in lobula plate giant neurons. Also expressed in adult wing and eyes.

It is found in the golgi apparatus membrane. The catalysed reaction is N(4)-(alpha-D-Man-(1-&gt;2)-alpha-D-Man-(1-&gt;2)-alpha-D-Man-(1-&gt;3)-[alpha-D-Man-(1-&gt;2)-alpha-D-Man-(1-&gt;3)-[alpha-D-Man-(1-&gt;2)-alpha-D-Man-(1-&gt;6)]-alpha-D-Man-(1-&gt;6)]-beta-D-Man-(1-&gt;4)-beta-D-GlcNAc-(1-&gt;4)-beta-D-GlcNAc)-L-asparaginyl-[protein] (N-glucan mannose isomer 9A1,2,3B1,2,3) + 4 H2O = N(4)-(alpha-D-Man-(1-&gt;3)-[alpha-D-Man-(1-&gt;3)-[alpha-D-Man-(1-&gt;6)]-alpha-D-Man-(1-&gt;6)]-beta-D-Man-(1-&gt;4)-beta-D-GlcNAc-(1-&gt;4)-beta-D-GlcNAc)-L-asparaginyl-[protein] (N-glucan mannose isomer 5A1,2) + 4 beta-D-mannose. It carries out the reaction N(4)-(alpha-D-Man-(1-&gt;2)-alpha-D-Man-(1-&gt;2)-alpha-D-Man-(1-&gt;3)-[alpha-D-Man-(1-&gt;3)-[alpha-D-Man-(1-&gt;2)-alpha-D-Man-(1-&gt;6)]-alpha-D-Man-(1-&gt;6)]-beta-D-Man-(1-&gt;4)-beta-D-GlcNAc-(1-&gt;4)-beta-D-GlcNAc)-L-asparaginyl-[protein] (N-glucan mannose isomer 8A1,2,3B1,3) + 3 H2O = N(4)-(alpha-D-Man-(1-&gt;3)-[alpha-D-Man-(1-&gt;3)-[alpha-D-Man-(1-&gt;6)]-alpha-D-Man-(1-&gt;6)]-beta-D-Man-(1-&gt;4)-beta-D-GlcNAc-(1-&gt;4)-beta-D-GlcNAc)-L-asparaginyl-[protein] (N-glucan mannose isomer 5A1,2) + 3 beta-D-mannose. Its pathway is protein modification; protein glycosylation. In terms of biological role, involved in the maturation of Asn-linked oligosaccharides. Progressively trim alpha-1,2-linked mannose residues from Man(9)GlcNAc(2) to produce Man(5)GlcNAc(2). This Drosophila melanogaster (Fruit fly) protein is Mannosyl-oligosaccharide alpha-1,2-mannosidase IA.